The primary structure comprises 349 residues: Lachesin (349 aa).

A signal peptide spans 1–18 (MDLRLYTIFVGFFSVVYA). An Ig-like V-type domain is found at 22–127 (PTISYISQEQ…NKITAEVDLQ (106 aa)). Residues cysteine 43 and cysteine 110 are joined by a disulfide bond. Ig-like C2-type domains follow at residues 132-218 (PVIS…IAVE) and 222-315 (PPVI…VELF). An N-linked (GlcNAc...) asparagine glycan is attached at asparagine 137. 2 cysteine pairs are disulfide-bonded: cysteine 154/cysteine 201 and cysteine 244/cysteine 299. Glycine 332 is lipidated: GPI-anchor amidated glycine. Residues 333 to 349 (DAAEISTSMALILISTI) constitute a propeptide, removed in mature form.

Post-translationally, the N-terminus is blocked. In terms of tissue distribution, expressed by all neurogenic cells early, but only those cells that become neuroblasts continue to express it. Expressed by neuroblasts, ganglion mother cells and neurons early in their lives, but expression becomes restricted to a subset of neurons as development progresses. Expressed by sensory neurons as they delaminate from the body wall ectoderm. It is also present on growing axons of the CNS and PNS and becomes restricted to a subset of axons later in development.

Its subcellular location is the cell membrane. Its function is as follows. May play a role in early neuronal differentiation and axon outgrowth. The polypeptide is Lachesin (LAC) (Schistocerca americana (American grasshopper)).